We begin with the raw amino-acid sequence, 760 residues long: Forkhead box protein M1 (760 aa).

Disordered stretches follow at residues 1–54 (MRTS…AESS) and 95–167 (GKES…SYAG). Low complexity-rich tracts occupy residues 43-54 (PAQASQEVAESS) and 110-124 (SSGGPSSHPSQPQAH). Residues 125 to 134 (SSRDSKRAEV) are compositionally biased toward basic and acidic residues. Over residues 140–149 (GPKPAAKGVP) the composition is skewed to low complexity. Residues K199 and K323 each participate in a glycyl lysine isopeptide (Lys-Gly) (interchain with G-Cter in SUMO2) cross-link. The segment at residues 233-325 (ERPPYSYMAM…LTLDQVFKPL (93 aa)) is a DNA-binding region (fork-head). The tract at residues 323–348 (KPLEPGSPQSPEHLESQQKRPNPELH) is disordered. S329 carries the post-translational modification Phosphoserine. A compositionally biased stretch (basic and acidic residues) spans 334-348 (EHLESQQKRPNPELH). A Glycyl lysine isopeptide (Lys-Gly) (interchain with G-Cter in SUMO2) cross-link involves residue K354. S374 carries the phosphoserine; by CHEK2 modification. Residues K420 and K438 each participate in a glycyl lysine isopeptide (Lys-Gly) (interchain with G-Cter in SUMO2) cross-link. Disordered stretches follow at residues 500 to 560 (SWED…PDLF), 577 to 635 (ESSE…LDFS), and 660 to 709 (PLKS…IPSL). S521 is subject to Phosphoserine. The segment covering 531–542 (VTKRREKREVSR) has biased composition (basic and acidic residues). Polar residues predominate over residues 604–613 (PVSSTPSKSV). A Phosphothreonine; by CDK1 modification is found at T608. Phosphothreonine is present on T624. Residues S727 and S736 each carry the phosphoserine; by PLK1 modification.

In terms of processing, phosphorylated in M (mitotic) phase. Phosphorylation by the checkpoint kinase CHEK2 in response to DNA damage increases the FOXM1 protein stability probably stimulating the transcription of genes involved in DNA repair. Phosphorylated by CDK1 in late S and G2 phases, creating docking sites for the POLO box domains of PLK1. Subsequently, PLK1 binds and phosphorylates FOXM1, leading to activation of transcriptional activity and subsequent enhanced expression of key mitotic regulators. Phosphorylated by GSK3B leading to ubiquitination and proteasomal degradation. In terms of tissue distribution, expressed in fetal heart, brain, liver, lung, kidney and limb, but only in adult thymus. Appears to be expressed only in adult organs containing proliferating/cycling cells or in response to growth factors.

The protein resides in the nucleus. In terms of biological role, transcription factor regulating the expression of cell cycle genes essential for DNA replication and mitosis. Plays a role in the control of cell proliferation. Also plays a role in DNA break repair, participating in the DNA damage checkpoint response. Promotes transcription of PHB2. The protein is Forkhead box protein M1 (Foxm1) of Mus musculus (Mouse).